We begin with the raw amino-acid sequence, 190 residues long: NADH-ubiquinone oxidoreductase 75 kDa subunit, mitochondrial (190 aa).

Belongs to the complex I 75 kDa subunit family. Core subunit of respiratory chain NADH dehydrogenase (Complex I) which is composed of 45 different subunits. This is the largest subunit of complex I and it is a component of the iron-sulfur (IP) fragment of the enzyme. Complex I associates with ubiquinol-cytochrome reductase complex (Complex III) to form supercomplexes. Interacts with MDM2 and AKAP1. It depends on [2Fe-2S] cluster as a cofactor. The cofactor is [4Fe-4S] cluster.

Its subcellular location is the mitochondrion inner membrane. The catalysed reaction is a ubiquinone + NADH + 5 H(+)(in) = a ubiquinol + NAD(+) + 4 H(+)(out). In terms of biological role, core subunit of the mitochondrial membrane respiratory chain NADH dehydrogenase (Complex I) which catalyzes electron transfer from NADH through the respiratory chain, using ubiquinone as an electron acceptor. Essential for catalysing the entry and efficient transfer of electrons within complex I. Plays a key role in the assembly and stability of complex I and participates in the association of complex I with ubiquinol-cytochrome reductase complex (Complex III) to form supercomplexes. This chain is NADH-ubiquinone oxidoreductase 75 kDa subunit, mitochondrial, found in Mesocricetus auratus (Golden hamster).